The primary structure comprises 448 residues: Protein arginine N-methyltransferase 2 (448 aa).

Interaction with ESR1 stretches follow at residues 1–289 and 145–287; these read MEAP…SALK and KESL…NLSA. One can recognise an SH3 domain in the interval 42-101; the sequence is LQPEEFVAIADYTATDETQLSFLRGEKILILRQTTADWWWGERAGCCGYIPANHLGKQLE. Asymmetric dimethylarginine is present on residues arginine 73 and arginine 84. Residues 95–219 are interaction with RB1; that stretch reads HLGKQLEEYD…DVVLPEKVDV (125 aa). One can recognise an SAM-dependent MTase PRMT-type domain in the interval 111 to 414; it reads DEEYFDSYGT…CCVTKKSGME (304 aa). Positions 124, 133, 157, 180, and 209 each coordinate S-adenosyl-L-methionine. Active-site residues include glutamate 223 and glutamate 232.

It belongs to the class I-like SAM-binding methyltransferase superfamily. Protein arginine N-methyltransferase family. As to quaternary structure, self-associates. Interacts with HNRNPUL1. Interacts with NFKBIA. Interacts with NCOA6 coactivator. Interacts (via SH3 domain) with PRMT8. Interacts with AR. Interacts with ESR1, ESR2, PGR, PPARG, RARA, RXRA and THRB. Interacts with RB1 and E2F1. In terms of tissue distribution, expressed in liver, pancreas, lung, brain, skeletal muscle, heart, muscle and fat.

The protein localises to the cytoplasm. Its subcellular location is the nucleus. The catalysed reaction is L-arginyl-[protein] + 2 S-adenosyl-L-methionine = N(omega),N(omega)-dimethyl-L-arginyl-[protein] + 2 S-adenosyl-L-homocysteine + 2 H(+). In terms of biological role, arginine methyltransferase that methylates the guanidino nitrogens of arginyl residues in proteins such as STAT3, FBL, histone H4. May inhibit NF-kappa-B transcription, and promote apoptosis. Represses E2F1 transcriptional activity (in a RB1-dependent manner). Has a negative regulation effect on G1 to S transition of mitotic cell cycle. Involved in growth regulation. Acts as a coactivator (with NCOA2) of the androgen receptor (AR)-mediated transactivation. Acts as a coactivator (with estrogen) of estrogen receptor (ER)-mediated transactivation. Enhances PGR, PPARG, RARA-mediated transactivation. In Mus musculus (Mouse), this protein is Protein arginine N-methyltransferase 2 (Prmt2).